Here is a 418-residue protein sequence, read N- to C-terminus: Equilibrative nucleotide transporter 4 (418 aa).

11 helical membrane passes run 20-40, 54-74, 85-105, 108-128, 147-169, 186-206, 264-284, 291-311, 326-346, 353-373, and 392-412; these read MVVC…MLTI, SRVF…ILAY, ILTG…LDLT, GHGG…FGLA, LIQS…RLIT, IFLA…AYVF, HAVN…GFLY, GLGD…DLFG, KALT…YFTA, WMIM…VCIM, and LVVF…LWLI.

This sequence belongs to the SLC29A/ENT transporter (TC 2.A.57) family. As to expression, expressed in leaves and at lowe levels in stems and flowers.

The protein localises to the cell membrane. Functionally, nucleoside transporter that can mediate uptake of adenosine, uridine, guanosine or cytidine when expressed in a heterologous system (yeast). This Arabidopsis thaliana (Mouse-ear cress) protein is Equilibrative nucleotide transporter 4 (ENT4).